A 1033-amino-acid chain; its full sequence is DNA polymerase I A, chloroplastic (1033 aa).

The span at 1 to 11 shows a compositional bias: pro residues; that stretch reads MAVAPPLPPAP. 2 disordered regions span residues 1–32 and 104–142; these read MAVA…LSSP and TNGT…PSNS. Residues 1-55 constitute a chloroplast transit peptide; the sequence is MAVAPPLPPAPARQLRRWKGSSPRPPPWLSSPFRRTRYLSRPAFAAGGRQDYSPS. Positions 115–124 are enriched in basic and acidic residues; that stretch reads LRHDPSEDIR. The span at 125–142 shows a compositional bias: polar residues; it reads SSNYPSLYNQRERGPSNS. The region spanning 321–482 is the 3'-5' exonuclease domain; it reads FGNGKTCIWV…LYESLKNKLE (162 aa). The tract at residues 696–1030 is polymerase; sequence CHAIAALCEV…VDAKYAKSWY (335 aa).

It belongs to the DNA polymerase type-A family. In terms of tissue distribution, expressed in shoot apical meristem, root apical meristem, leaf primordia and the marginal meristem.

Its subcellular location is the plastid. It localises to the chloroplast. It carries out the reaction DNA(n) + a 2'-deoxyribonucleoside 5'-triphosphate = DNA(n+1) + diphosphate. Inhibited by dideoxythymidine-triphosphate (ddTTP), but not by aphidicolin and N-ethylmaleimide. Functionally, in addition to polymerase activity, this DNA polymerase exhibits 5'-3' exonuclease activity. May be required for DNA replication and accumulation in plastids. The sequence is that of DNA polymerase I A, chloroplastic from Oryza sativa subsp. japonica (Rice).